Reading from the N-terminus, the 1075-residue chain is mRNA-binding protein PUF2 (1075 aa).

The tract at residues 38–68 (NTNARSVRVSDKRGRSSSTSPQKIGSYRTRA) is disordered. S72 is subject to Phosphoserine. Low complexity predominate over residues 93 to 105 (TPVVVVPPTSSTP). The segment at 93–112 (TPVVVVPPTSSTPDSLNSTT) is disordered. At S198 the chain carries Phosphoserine. Residues 316–402 (NTISISNVFP…APSTVSFARV (87 aa)) form the RRM domain. The PUM-HD domain maps to 511-872 (ELNHLLQNAL…QLLEEVGLSS (362 aa)). 6 Pumilio repeats span residues 574–611 (AIVM…IMLR), 612–647 (KCNK…NLVT), 649–683 (GVSD…FIFE), 684–719 (SVLS…QLLT), 722–758 (SLII…LILC), and 760–800 (KLVN…KIIH). Phosphoserine occurs at positions 872 and 876. Disordered regions lie at residues 874 to 931 (GISP…LNFN) and 997 to 1075 (NNYN…SYGY). 3 stretches are compositionally biased toward low complexity: residues 901–916 (VSVS…HNSV), 997–1009 (NNYN…SQMN), and 1018–1063 (NNNN…NNNN).

It localises to the cytoplasm. Its function is as follows. RNA-binding protein involved in post-transcriptional regulation. Negatively regulates expression of COX17 by binding to the 3'-UTR of COX17 mRNA. Promotes decay of COX17 mRNA by enhancing its rate of deadenylation and subsequent turnover. Predominantly binds to mRNAs encoding membrane-associated proteins with roles in transmembrane transport and vesicular trafficking. This Saccharomyces cerevisiae (strain ATCC 204508 / S288c) (Baker's yeast) protein is mRNA-binding protein PUF2 (PUF2).